Here is a 755-residue protein sequence, read N- to C-terminus: Cartilage oligomeric matrix protein (755 aa).

The first 19 residues, 1 to 19, serve as a signal peptide directing secretion; that stretch reads MGPTACVLVLALAILRATG. Residues 21–84 form a COMP N-terminal region; it reads GQIPLGGDLA…PARTPGLSVR (64 aa). The EGF-like 1 domain maps to 85-124; sequence PVPLCAPGSCFPGVVCSETATGARCGPCPPGYTGNGSHCT. Intrachain disulfides connect C89–C100, C94–C109, C112–C123, C129–C140, C134–C149, C152–C176, C182–C195, C189–C204, C207–C219, C227–C241, C235–C251, C253–C264, C280–C285, C290–C310, C326–C346, C349–C369, C385–C405, C408–C428, C446–C466, C482–C502, and C518–C739. A glycan (N-linked (GlcNAc...) asparagine) is linked at N119. The region spanning 125-177 is the EGF-like 2; calcium-binding domain; it reads DVNECNAHPCFPRVRCINTSPGFHCEACPPGFSGPTHEGVGLTFAKSNKQVCT. The EGF-like 3; calcium-binding domain occupies 178–220; that stretch reads DINECETGQHNCVPNSVCVNTRGSFQCGPCQPGFVGDQTSGCQ. The EGF-like 4 domain maps to 223–265; the sequence is GQHFCPDGSPSPCHEKANCVLERDGSRSCVCAVGWAGNGLLCG. TSP type-3 repeat units lie at residues 266–298, 299–334, 335–357, 358–393, 394–416, 417–454, 455–490, and 491–526; these read RDTDLDGFPDEKLRCSERQCRKDNCVTVPNSGQ, EDVDRDGIGDACDPDADGDGVPNEQDNCPLVRNPDQ, RNSDSDKWGDACDNCRSKKNDDQ, KDTDLDGRGDACDDDIDGDRIRNVADNCPRVPNFDQ, SDSDGDGVGDACDNCPQKDNPDQ, RDVDHDFVGDACDSDQDQDGDGHQDSRDNCPTVPNSAQ, QDSDHDGKGDACDDDDDNDGVPDSRDNCRLVPNPGQ, and EDNDRDGVGDACQGDFDADKVIDKIDVCPENAEVTL. 2 disordered regions span residues 296–341 and 353–501; these read SGQE…DSDK and KNDD…VGDA. Basic and acidic residues-rich tracts occupy residues 332-341 and 353-368; these read PDQRNSDSDK and KNDDQKDTDLDGRGDA. S394 carries the phosphoserine modification. Basic and acidic residues-rich tracts occupy residues 412–424 and 456–465; these read DNPDQRDVDHDFV and DSDHDGKGDA. Residues 525-755 are mediates cell survival and induction of the IAP family of survival proteins; that stretch reads TLTDFRAFQT…DYESHRLQRV (231 aa). The TSP C-terminal domain maps to 530-744; sequence RAFQTVVLDP…LRYRCNDTIP (215 aa). A glycan (N-linked (GlcNAc...) asparagine) is linked at N740.

The protein belongs to the thrombospondin family. As to quaternary structure, pentamer; disulfide-linked. Exists in a more compact conformation in the presence of calcium and shows a more extended conformation in the absence of calcium. Interacts with ITGB3, ITGA5 and FN1. Binding to FN1 requires the presence of divalent cations (Ca(2+), Mg(2+) or Mn(2+)). The greatest amount of binding is seen in the presence of Mn(2+). Interacts with MATN1, MATN3, MATN4 and ACAN. Binds heparin, heparan sulfate and chondroitin sulfate. EDTA dimishes significantly its binding to ACAN and abolishes its binding to MATN3, MATN4 and chondroitin sulfate. Interacts with collagen I, II and IX, and interaction with these collagens is dependent on the presence of zinc ions. Interacts with ADAMTS12. Interacts with ITGA7. It depends on Ca(2+) as a cofactor. Post-translationally, proteolytically cleaved by metalloproteases ADAMTS4 and ADAMTS1 with ADAMTS4 showing more potent activity. In terms of tissue distribution, expressed in cartilage, including nasal, knee epiphyseal and rib tissues. Abundantly expressed in chondrocyte and tendon extracellular matrix (at protein level).

The protein localises to the secreted. The protein resides in the extracellular space. It localises to the extracellular matrix. Its function is as follows. Plays a role in the structural integrity of cartilage via its interaction with other extracellular matrix proteins such as the collagens and fibronectin. Can mediate the interaction of chondrocytes with the cartilage extracellular matrix through interaction with cell surface integrin receptors. Could play a role in the pathogenesis of osteoarthritis. Potent suppressor of apoptosis in both primary chondrocytes and transformed cells. Suppresses apoptosis by blocking the activation of caspase-3 and by inducing the IAP family of survival proteins (BIRC3, BIRC2, BIRC5 and XIAP). Essential for maintaining a vascular smooth muscle cells (VSMCs) contractile/differentiated phenotype under physiological and pathological stimuli. Maintains this phenotype of VSMCs by interacting with ITGA7. The sequence is that of Cartilage oligomeric matrix protein from Mus musculus (Mouse).